Reading from the N-terminus, the 188-residue chain is uncharacterized protein (188 aa).

Residues 57–80 (NDDVAPVAEGPKQERRSPSRNIGR) are disordered.

The protein belongs to the transposase 25 family.

This is an uncharacterized protein from Sinorhizobium fredii (strain NBRC 101917 / NGR234).